We begin with the raw amino-acid sequence, 276 residues long: NAD-capped RNA hydrolase NudC (276 aa).

Arg-82 lines the substrate pocket. Zn(2+) contacts are provided by Cys-112 and Cys-115. Glu-125 contacts substrate. Residues Cys-130 and Cys-133 each coordinate Zn(2+). Residue Tyr-138 coordinates substrate. The 124-residue stretch at 139–262 (PRISPSMIVL…SIARYLIDLY (124 aa)) folds into the Nudix hydrolase domain. A divalent metal cation-binding residues include Ala-172, Glu-188, and Glu-192. Positions 173–194 (GFAEPGESAEDCLIREVREEVS) match the Nudix box motif. 206–213 (QCWPFPHS) serves as a coordination point for substrate. An a divalent metal cation-binding site is contributed by Glu-233. Residue Ala-255 participates in substrate binding.

Belongs to the Nudix hydrolase family. NudC subfamily. As to quaternary structure, homodimer. Mg(2+) serves as cofactor. Requires Mn(2+) as cofactor. It depends on Zn(2+) as a cofactor.

The catalysed reaction is a 5'-end NAD(+)-phospho-ribonucleoside in mRNA + H2O = a 5'-end phospho-adenosine-phospho-ribonucleoside in mRNA + beta-nicotinamide D-ribonucleotide + 2 H(+). It catalyses the reaction NAD(+) + H2O = beta-nicotinamide D-ribonucleotide + AMP + 2 H(+). It carries out the reaction NADH + H2O = reduced beta-nicotinamide D-ribonucleotide + AMP + 2 H(+). In terms of biological role, mRNA decapping enzyme that specifically removes the nicotinamide adenine dinucleotide (NAD) cap from a subset of mRNAs by hydrolyzing the diphosphate linkage to produce nicotinamide mononucleotide (NMN) and 5' monophosphate mRNA. The NAD-cap is present at the 5'-end of some mRNAs and stabilizes RNA against 5'-processing. Has preference for mRNAs with a 5'-end purine. Catalyzes the hydrolysis of a broad range of dinucleotide pyrophosphates. This chain is NAD-capped RNA hydrolase NudC, found in Pseudomonas fluorescens (strain ATCC BAA-477 / NRRL B-23932 / Pf-5).